A 296-amino-acid polypeptide reads, in one-letter code: Sulfotransferase 6B1 (296 aa).

His-112 (proton acceptor) is an active-site residue. Residues Arg-134, Ser-142, Tyr-197, and 253–255 contribute to the 3'-phosphoadenylyl sulfate site; that span reads RKG.

It belongs to the sulfotransferase 1 family.

The protein resides in the cytoplasm. It localises to the cytosol. It carries out the reaction thyroxine + 3'-phosphoadenylyl sulfate = thyroxine sulfate + adenosine 3',5'-bisphosphate + H(+). With respect to regulation, strongly inhibited by the divalent metal cations Fe(2+), Hg(2+), Co(2+), Zn(2+), Cu(2+) and Cd(2+). Its function is as follows. Sulfotransferase that utilizes 3'-phospho-5'-adenylyl sulfate (PAPS) as sulfonate donor to catalyze the sulfate conjugation of a variety of xenobiotic and endogenous compounds, including dopamine, T3 (triiodo-L-thyronine), T4 (thyroxine), flavonoids, isoflavonoids, and other phenolic compounds. This Danio rerio (Zebrafish) protein is Sulfotransferase 6B1.